The sequence spans 236 residues: MQTSIDPVFAGWDGSVAQARQLQQQLAQRVALRDEVSAAPALLAGFDVGFEDDGQTTRAAAVLLDAQTLLPLETHVARVPTSMPYVPGLLSFRELPALLRALALLARTPDLVFIDGQGIAHPRRFGIAAHFGVVTGLPSIGVAKQRLAGTFIEPGGERGDHSPILLAGAQIGWALRSKPRCNPLIVSPGHRVSMQGALDWTLRTLRAYRLPEPTRLADRLASRRGEIELQTQPTLL.

The Mg(2+) site is built by Asp47 and Asp115.

Belongs to the endonuclease V family. The cofactor is Mg(2+).

The protein localises to the cytoplasm. The catalysed reaction is Endonucleolytic cleavage at apurinic or apyrimidinic sites to products with a 5'-phosphate.. Its function is as follows. DNA repair enzyme involved in the repair of deaminated bases. Selectively cleaves double-stranded DNA at the second phosphodiester bond 3' to a deoxyinosine leaving behind the intact lesion on the nicked DNA. This is Endonuclease V from Xanthomonas campestris pv. campestris (strain 8004).